The sequence spans 154 residues: 6,7-dimethyl-8-ribityllumazine synthase (154 aa).

Residues Phe-26, 60–62 (ALE), and 84–86 (CII) each bind 5-amino-6-(D-ribitylamino)uracil. 89 to 90 (QT) is a (2S)-2-hydroxy-3-oxobutyl phosphate binding site. Residue His-92 is the Proton donor of the active site. Asn-117 serves as a coordination point for 5-amino-6-(D-ribitylamino)uracil. Arg-131 is a (2S)-2-hydroxy-3-oxobutyl phosphate binding site.

It belongs to the DMRL synthase family.

It carries out the reaction (2S)-2-hydroxy-3-oxobutyl phosphate + 5-amino-6-(D-ribitylamino)uracil = 6,7-dimethyl-8-(1-D-ribityl)lumazine + phosphate + 2 H2O + H(+). The protein operates within cofactor biosynthesis; riboflavin biosynthesis; riboflavin from 2-hydroxy-3-oxobutyl phosphate and 5-amino-6-(D-ribitylamino)uracil: step 1/2. Functionally, catalyzes the formation of 6,7-dimethyl-8-ribityllumazine by condensation of 5-amino-6-(D-ribitylamino)uracil with 3,4-dihydroxy-2-butanone 4-phosphate. This is the penultimate step in the biosynthesis of riboflavin. The polypeptide is 6,7-dimethyl-8-ribityllumazine synthase (Verminephrobacter eiseniae (strain EF01-2)).